The sequence spans 94 residues: Putative septation protein SpoVG (94 aa).

This sequence belongs to the SpoVG family.

In terms of biological role, could be involved in septation. The polypeptide is Putative septation protein SpoVG (Acholeplasma laidlawii (strain PG-8A)).